Consider the following 333-residue polypeptide: Procathepsin L (333 aa).

An N-terminal signal peptide occupies residues 1–17; that stretch reads MNPTFILAALCLGIASA. Positions 18–113 are cleaved as a propeptide — activation peptide; that stretch reads TLTFNHSLEA…KVFQEPLFYE (96 aa). Glutamate 122 lines the Zn(2+) pocket. 2 disulfides stabilise this stretch: cysteine 135–cysteine 178 and cysteine 169–cysteine 211. Residue cysteine 138 is part of the active site. Positions 163, 184, 199, 205, 209, 227, 250, 253, 273, and 275 each coordinate Zn(2+). A disulfide bond links cysteine 269 and cysteine 322. Histidine 276 is a catalytic residue. Positions 289 to 291 are excised as a propeptide; it reads ESD. Asparagine 300 is a catalytic residue.

It belongs to the peptidase C1 family. As to quaternary structure, dimer of a heavy and a light chain linked by disulfide bonds. Interacts with Long isoform of CD74/Ii chain; the interaction stabilizes the conformation of mature CTSL. During export along the endocytic pathway, pro-CTSL undergoes several proteolytic cleavages to generate the CTSL single-chain and two-chain mature forms, composed of a heavy chain linked to a light chain by disulfide bonds. Autocleavage; produces the single-chain CTSL after cleavage of the propeptide. The cleavage can be intermolecular.

The protein resides in the lysosome. It localises to the apical cell membrane. Its subcellular location is the cytoplasmic vesicle. The protein localises to the secretory vesicle. It is found in the chromaffin granule. The protein resides in the secreted. It localises to the extracellular space. The catalysed reaction is Specificity close to that of papain. As compared to cathepsin B, cathepsin L exhibits higher activity toward protein substrates, but has little activity on Z-Arg-Arg-NHMec, and no peptidyl-dipeptidase activity.. With respect to regulation, inhibited by the propeptide produced by autocleavage. Long isoform of CD74/Ii chain stabilizes the conformation of mature CTSL by binding to its active site and serving as a chaperone to help maintain a pool of mature enzyme in endocytic compartments and extracellular space of APCs. IFNG enhances the conversion into the CTSL mature and active form. Inhibited by CST6. Inhibited by the glycopeptide antibiotic teicoplanin. Inhibited by amantadine. Thiol protease important for the overall degradation of proteins in lysosomes. Plays a critical for normal cellular functions such as general protein turnover, antigen processing and bone remodeling. Involved in the solubilization of cross-linked TG/thyroglobulin and in the subsequent release of thyroid hormone thyroxine (T4) by limited proteolysis of TG/thyroglobulin in the thyroid follicle lumen. In neuroendocrine chromaffin cells secretory vesicles, catalyzes the prohormone proenkephalin processing to the active enkephalin peptide neurotransmitter. In thymus, regulates CD4(+) T cell positive selection by generating the major histocompatibility complex class II (MHCII) bound peptide ligands presented by cortical thymic epithelial cells. Also mediates invariant chain processing in cortical thymic epithelial cells. Major elastin-degrading enzyme at neutral pH. Accumulates as a mature and active enzyme in the extracellular space of antigen presenting cells (APCs) to regulate degradation of the extracellular matrix in the course of inflammation. Secreted form generates endostatin from COL18A1. Critical for cardiac morphology and function. Plays an important role in hair follicle morphogenesis and cycling, as well as epidermal differentiation. Required for maximal stimulation of steroidogenesis by TIMP1. The sequence is that of Procathepsin L (CTSL) from Chlorocebus aethiops (Green monkey).